We begin with the raw amino-acid sequence, 332 residues long: Divalent cation transporter CmaX (332 aa).

At M1–I277 the chain is on the cytoplasmic side. Residues I278–S286 traverse the membrane as a helical segment. At F287 to G307 the chain is on the periplasmic side. Residues F308–W323 traverse the membrane as a helical segment. At W324–L332 the chain is on the cytoplasmic side.

Belongs to the CorA metal ion transporter (MIT) (TC 1.A.35) family. Homopentamer.

It localises to the cell inner membrane. The catalysed reaction is Zn(2+)(in) = Zn(2+)(out). It carries out the reaction Cd(2+)(in) = Cd(2+)(out). The enzyme catalyses Ni(2+)(in) = Ni(2+)(out). It catalyses the reaction Co(2+)(in) = Co(2+)(out). Functionally, transports divalent cations including Zn(2+), Cd(2+), Ni(2+) and Co(2+). The proton gradient has a small influence on transport suggesting that the transport is probably not proton-dependent. The chain is Divalent cation transporter CmaX from Pseudomonas aeruginosa (strain ATCC 15692 / DSM 22644 / CIP 104116 / JCM 14847 / LMG 12228 / 1C / PRS 101 / PAO1).